The sequence spans 217 residues: Adenylate kinase (217 aa).

10-15 (GAGKGT) lines the ATP pocket. The interval 30–59 (STGDMFRAAMKEETPLGLEAKSYIDKGELV) is NMP. Residues Thr31, Arg36, 57-59 (ELV), 85-88 (GFPR), and Gln92 each bind AMP. An LID region spans residues 126-163 (GRRICSVCGTTYHLVFNPPKTPGICDKDGGELYQRADD). Arg127 is an ATP binding site. Zn(2+)-binding residues include Cys130 and Cys133. 136-137 (TY) serves as a coordination point for ATP. Positions 150 and 153 each coordinate Zn(2+). The AMP site is built by Arg160 and Arg171. ATP is bound at residue Gln199.

It belongs to the adenylate kinase family. As to quaternary structure, monomer.

Its subcellular location is the cytoplasm. It catalyses the reaction AMP + ATP = 2 ADP. It functions in the pathway purine metabolism; AMP biosynthesis via salvage pathway; AMP from ADP: step 1/1. Its function is as follows. Catalyzes the reversible transfer of the terminal phosphate group between ATP and AMP. Plays an important role in cellular energy homeostasis and in adenine nucleotide metabolism. The chain is Adenylate kinase from Bacillus subtilis (strain 168).